Here is a 1438-residue protein sequence, read N- to C-terminus: DNA-directed RNA polymerase subunit beta' (1438 aa).

Zn(2+) contacts are provided by Cys-72, Cys-74, Cys-87, and Cys-90. Residues Asp-483, Asp-485, and Asp-487 each coordinate Mg(2+). Positions 831, 905, 912, and 915 each coordinate Zn(2+).

The protein belongs to the RNA polymerase beta' chain family. In terms of assembly, the RNAP catalytic core consists of 2 alpha, 1 beta, 1 beta' and 1 omega subunit. When a sigma factor is associated with the core the holoenzyme is formed, which can initiate transcription. It depends on Mg(2+) as a cofactor. Requires Zn(2+) as cofactor.

The catalysed reaction is RNA(n) + a ribonucleoside 5'-triphosphate = RNA(n+1) + diphosphate. In terms of biological role, DNA-dependent RNA polymerase catalyzes the transcription of DNA into RNA using the four ribonucleoside triphosphates as substrates. In Flavobacterium psychrophilum (strain ATCC 49511 / DSM 21280 / CIP 103535 / JIP02/86), this protein is DNA-directed RNA polymerase subunit beta'.